We begin with the raw amino-acid sequence, 364 residues long: Coproporphyrin III ferrochelatase (364 aa).

Residues Arg29 and Tyr118 each coordinate Fe-coproporphyrin III. Positions 169 and 250 each coordinate Fe(2+).

This sequence belongs to the ferrochelatase family.

Its subcellular location is the cytoplasm. It catalyses the reaction Fe-coproporphyrin III + 2 H(+) = coproporphyrin III + Fe(2+). It participates in porphyrin-containing compound metabolism; protoheme biosynthesis. Its function is as follows. Involved in coproporphyrin-dependent heme b biosynthesis. Catalyzes the insertion of ferrous iron into coproporphyrin III to form Fe-coproporphyrin III. The polypeptide is Coproporphyrin III ferrochelatase (Streptococcus pneumoniae (strain Taiwan19F-14)).